Reading from the N-terminus, the 413-residue chain is NPL4-like protein 1 (413 aa).

At serine 104 the chain carries Phosphoserine. One can recognise an MPN domain in the interval 131 to 272; that stretch reads SVSFDRDCAN…ADVHFEPFQM (142 aa).

The protein belongs to the NPL4 family.

It functions in the pathway protein degradation; proteasomal ubiquitin-dependent pathway. Functionally, may be part of a complex that binds ubiquitinated proteins and that is necessary for the export of misfolded proteins from the ER to the cytoplasm, where they are degraded by the proteasome. This is NPL4-like protein 1 from Arabidopsis thaliana (Mouse-ear cress).